The primary structure comprises 233 residues: MSPQDRPSRTTEAFFGRRRGKPVRPQQAAALESGLDAYRLDLTADAPSDLRTLFETEVSAVRLEIGFGGGEHLLHRAIEAPTTGFIGVEPFVNGMAKMMMAVRARPLANLRVHDDDATRLLDWLPPASLGGIDLLYPDPWPKKKHWKRRFVSPVNLERFARVLKPGAKFRFASDIDTYVNWTLLHCRAHGAFAWQAAEAADWHRPYEGWPGTRYEAKAIREGRRPAYLTFVRK.

The segment at 1–23 (MSPQDRPSRTTEAFFGRRRGKPV) is disordered. Positions 64, 89, 116, and 138 each coordinate S-adenosyl-L-methionine. D138 is a catalytic residue. Residues K142, D174, and 212-215 (TRYE) each bind substrate.

Belongs to the class I-like SAM-binding methyltransferase superfamily. TrmB family.

The enzyme catalyses guanosine(46) in tRNA + S-adenosyl-L-methionine = N(7)-methylguanosine(46) in tRNA + S-adenosyl-L-homocysteine. It functions in the pathway tRNA modification; N(7)-methylguanine-tRNA biosynthesis. Catalyzes the formation of N(7)-methylguanine at position 46 (m7G46) in tRNA. The chain is tRNA (guanine-N(7)-)-methyltransferase from Mesorhizobium japonicum (strain LMG 29417 / CECT 9101 / MAFF 303099) (Mesorhizobium loti (strain MAFF 303099)).